The sequence spans 125 residues: Small ribosomal subunit protein uS13 (125 aa).

This sequence belongs to the universal ribosomal protein uS13 family. As to quaternary structure, part of the 30S ribosomal subunit. Forms a loose heterodimer with protein S19. Forms two bridges to the 50S subunit in the 70S ribosome.

In terms of biological role, located at the top of the head of the 30S subunit, it contacts several helices of the 16S rRNA. In the 70S ribosome it contacts the 23S rRNA (bridge B1a) and protein L5 of the 50S subunit (bridge B1b), connecting the 2 subunits; these bridges are implicated in subunit movement. Contacts the tRNAs in the A and P-sites. This Gluconobacter oxydans (strain 621H) (Gluconobacter suboxydans) protein is Small ribosomal subunit protein uS13.